The following is a 717-amino-acid chain: Fatty acid oxidation complex subunit alpha (717 aa).

Positions 1-190 (MIHAGNAITV…KDGAVDAVVA (190 aa)) are enoyl-CoA hydratase/isomerase. D298 is a binding site for substrate. The tract at residues 313–717 (HPVNQAAVLG…MAANNKKFYG (405 aa)) is 3-hydroxyacyl-CoA dehydrogenase. Residues M326, D345, 402–404 (VTE), K409, and S431 each bind NAD(+). Residue H452 is the For 3-hydroxyacyl-CoA dehydrogenase activity of the active site. N455 lines the NAD(+) pocket. Residue N502 coordinates substrate.

The protein in the N-terminal section; belongs to the enoyl-CoA hydratase/isomerase family. It in the C-terminal section; belongs to the 3-hydroxyacyl-CoA dehydrogenase family. In terms of assembly, heterotetramer of two alpha chains (FadB) and two beta chains (FadA).

It carries out the reaction a (3S)-3-hydroxyacyl-CoA + NAD(+) = a 3-oxoacyl-CoA + NADH + H(+). The enzyme catalyses a (3S)-3-hydroxyacyl-CoA = a (2E)-enoyl-CoA + H2O. It catalyses the reaction a 4-saturated-(3S)-3-hydroxyacyl-CoA = a (3E)-enoyl-CoA + H2O. The catalysed reaction is (3S)-3-hydroxybutanoyl-CoA = (3R)-3-hydroxybutanoyl-CoA. It carries out the reaction a (3Z)-enoyl-CoA = a 4-saturated (2E)-enoyl-CoA. The enzyme catalyses a (3E)-enoyl-CoA = a 4-saturated (2E)-enoyl-CoA. The protein operates within lipid metabolism; fatty acid beta-oxidation. Involved in the aerobic and anaerobic degradation of long-chain fatty acids via beta-oxidation cycle. Catalyzes the formation of 3-oxoacyl-CoA from enoyl-CoA via L-3-hydroxyacyl-CoA. It can also use D-3-hydroxyacyl-CoA and cis-3-enoyl-CoA as substrate. The sequence is that of Fatty acid oxidation complex subunit alpha from Acinetobacter baumannii (strain AB307-0294).